Consider the following 285-residue polypeptide: Probable endonuclease 4 (285 aa).

Zn(2+) is bound by residues His69, His109, Glu145, Asp179, His182, His216, Asp229, His231, and Glu261.

This sequence belongs to the AP endonuclease 2 family. Zn(2+) serves as cofactor.

It carries out the reaction Endonucleolytic cleavage to 5'-phosphooligonucleotide end-products.. Endonuclease IV plays a role in DNA repair. It cleaves phosphodiester bonds at apurinic or apyrimidinic (AP) sites, generating a 3'-hydroxyl group and a 5'-terminal sugar phosphate. This is Probable endonuclease 4 from Salmonella heidelberg (strain SL476).